The chain runs to 417 residues: MLKKAMNIADYDPELFKAIEDETCRQEEHIELIASENYTSPRVMEAQGSQLTNKYAEGYPGKRYYGGCEYVDVVETLAIERAKELFGATYANVQPHSGSQANSAVFMALLQPGDTVLGMNLAHGGHLTHGSPVNFSGKLYNIIPYGIDEAGKIDYDEMERLAIEHKPKMIIGGFSAFSGIVDWARMREIADKIGAYLFVDMAHVAGLIAAGVYPTPVPHAHVVTSTTHKTLAGPRGGIIISAADDEVLYKKLNSAVFPGGQGGPLMHVIAGKAVAFKEALEPEFKVYQQQVVKNAKAMVEVFLARGYKIVSGGTENHLMLVDLIGRDLTGKEADAALGSANITVNKNSVPNDPRSPFVTSGIRIGSPAITRRGFKEAEAKELTGWICDILDDATNTVVTDRVKGQVLALCARFPVYG.

(6S)-5,6,7,8-tetrahydrofolate-binding positions include L121 and 125–127; that span reads GHL. K229 bears the N6-(pyridoxal phosphate)lysine mark. 355–357 provides a ligand contact to (6S)-5,6,7,8-tetrahydrofolate; it reads SPF.

This sequence belongs to the SHMT family. Homodimer. The cofactor is pyridoxal 5'-phosphate.

The protein resides in the cytoplasm. The catalysed reaction is (6R)-5,10-methylene-5,6,7,8-tetrahydrofolate + glycine + H2O = (6S)-5,6,7,8-tetrahydrofolate + L-serine. The protein operates within one-carbon metabolism; tetrahydrofolate interconversion. Its pathway is amino-acid biosynthesis; glycine biosynthesis; glycine from L-serine: step 1/1. Its function is as follows. Catalyzes the reversible interconversion of serine and glycine with tetrahydrofolate (THF) serving as the one-carbon carrier. This reaction serves as the major source of one-carbon groups required for the biosynthesis of purines, thymidylate, methionine, and other important biomolecules. Also exhibits THF-independent aldolase activity toward beta-hydroxyamino acids, producing glycine and aldehydes, via a retro-aldol mechanism. The sequence is that of Serine hydroxymethyltransferase from Shewanella frigidimarina (strain NCIMB 400).